The following is a 189-amino-acid chain: Isopentenyl-diphosphate Delta-isomerase (189 aa).

H27 and H34 together coordinate Mn(2+). In terms of domain architecture, Nudix hydrolase spans P32–D171. The active site involves C69. Position 71 (H71) interacts with Mn(2+). E89 serves as a coordination point for Mg(2+). Mn(2+) is bound by residues E119 and E121. Residue E121 is part of the active site.

The protein belongs to the IPP isomerase type 1 family. Mg(2+) is required as a cofactor. It depends on Mn(2+) as a cofactor.

The protein localises to the cytoplasm. It catalyses the reaction isopentenyl diphosphate = dimethylallyl diphosphate. Its pathway is isoprenoid biosynthesis; dimethylallyl diphosphate biosynthesis; dimethylallyl diphosphate from isopentenyl diphosphate: step 1/1. Functionally, catalyzes the 1,3-allylic rearrangement of the homoallylic substrate isopentenyl (IPP) to its highly electrophilic allylic isomer, dimethylallyl diphosphate (DMAPP). The protein is Isopentenyl-diphosphate Delta-isomerase of Corynebacterium glutamicum (strain R).